Reading from the N-terminus, the 62-residue chain is Large ribosomal subunit protein bL28 (62 aa).

Belongs to the bacterial ribosomal protein bL28 family.

This is Large ribosomal subunit protein bL28 from Ruminiclostridium cellulolyticum (strain ATCC 35319 / DSM 5812 / JCM 6584 / H10) (Clostridium cellulolyticum).